We begin with the raw amino-acid sequence, 198 residues long: Ribonuclease HII (198 aa).

An RNase H type-2 domain is found at 10–198 (HLVAGVDEVG…PVKRALGLAS (189 aa)). A divalent metal cation-binding residues include Asp-16, Glu-17, and Asp-108.

It belongs to the RNase HII family. Requires Mn(2+) as cofactor. It depends on Mg(2+) as a cofactor.

It is found in the cytoplasm. The enzyme catalyses Endonucleolytic cleavage to 5'-phosphomonoester.. Its function is as follows. Endonuclease that specifically degrades the RNA of RNA-DNA hybrids. In Escherichia coli (strain ATCC 8739 / DSM 1576 / NBRC 3972 / NCIMB 8545 / WDCM 00012 / Crooks), this protein is Ribonuclease HII.